The chain runs to 118 residues: Large ribosomal subunit protein bL19 (118 aa).

Belongs to the bacterial ribosomal protein bL19 family.

Its function is as follows. This protein is located at the 30S-50S ribosomal subunit interface and may play a role in the structure and function of the aminoacyl-tRNA binding site. This is Large ribosomal subunit protein bL19 from Geotalea uraniireducens (strain Rf4) (Geobacter uraniireducens).